A 419-amino-acid polypeptide reads, in one-letter code: Ribosome biogenesis protein WDR12 homolog (419 aa).

The tract at residues 10–91 (VQVHLKTKQE…EDAIDIEYVE (82 aa)) is ubiquitin-like (UBL) domain. WD repeat units follow at residues 103–140 (LHDDWVSAVKACGKWILTGCYDNTINIWTNKGKHKLTI), 142–184 (GHTA…NAVE), 191–230 (GHERGVDSVCVSPDAQRFATGSWDTMLKIWSAGLDDTSEG), 249–287 (GHRESISAVQWMDATTLVTGSWDHTLKVWDLQLEGIKTE), 289–328 (STNKSIFDASYSKLNRLIVTASADKNLRLYDARTNQGSVV), 334–374 (GHNA…APLY), and 378–416 (GHGEKVLDIDWSNPKYIVSGGADNTVRVFKSGKATIENM).

This sequence belongs to the WD repeat WDR12/YTM1 family.

The protein resides in the nucleus. It is found in the nucleolus. It localises to the nucleoplasm. Required for maturation of ribosomal RNAs and formation of the large ribosomal subunit. In Drosophila virilis (Fruit fly), this protein is Ribosome biogenesis protein WDR12 homolog.